A 2703-amino-acid polypeptide reads, in one-letter code: Serine/arginine repetitive matrix protein 2 (2703 aa).

Met1 is modified (N-acetylmethionine). A coiled-coil region spans residues 60 to 92 (HERKRRVELRCLELEEMMEEQGYEEQQIQEKVA). N6-acetyllysine is present on Lys101. Glycyl lysine isopeptide (Lys-Gly) (interchain with G-Cter in SUMO2) cross-links involve residues Lys108 and Lys130. The tract at residues 141 to 1007 (ISDSYVDGSS…SGSFHLCPGV (867 aa)) is disordered. Tyr145 is subject to Phosphotyrosine. Lys169 bears the N6-acetyllysine mark. Composition is skewed to basic residues over residues 186-197 (KQKKKKKKKDRG) and 207-249 (RERK…KRSR). The sufficient for RNA-binding stretch occupies residues 197-259 (GRRSESSSPR…STTPAPKSRR (63 aa)). Ser220 and Ser222 each carry phosphoserine. The span at 263–284 (STSADSASSSDTSRSRSRSAAA) shows a compositional bias: low complexity. Phosphoserine is present on residues Ser295, Ser300, Ser310, Ser322, and Ser323. The segment covering 319 to 334 (QQPSSPAPSTKQSSSP) has biased composition (low complexity). Residues 335–345 (YEDKDKKEKSA) are compositionally biased toward basic and acidic residues. A phosphoserine mark is found at Ser349, Ser351, Ser355, and Ser356. 2 positions are modified to phosphothreonine: Thr357 and Thr365. 20 positions are modified to phosphoserine: Ser375, Ser385, Ser393, Ser396, Ser402, Ser406, Ser422, Ser433, Ser434, Ser435, Ser438, Ser452, Ser482, Ser484, Ser503, Ser505, Ser507, Ser531, Ser533, and Ser540. The segment covering 383–396 (PSSQEPVNPSSEAS) has biased composition (polar residues). The segment covering 425-437 (PTKGSRHASSSPE) has biased composition (polar residues). Over residues 459 to 533 (NRSHGRAKRD…SPQRRGRSRS (75 aa)) the composition is skewed to basic residues. The segment covering 534–543 (PQRPGWSRSR) has biased composition (low complexity). Composition is skewed to basic residues over residues 544-561 (NTQR…RSHS), 568-721 (GRSR…RRGR), and 730-740 (NKSRTSQRRSR). Phosphoserine is present on residues Ser700, Ser702, and Ser704. Ser773, Ser775, and Ser778 each carry phosphoserine. The segment covering 785 to 817 (SQTPTRRSRSGSSPPKQKSKTPPRQSRSNSPQP) has biased composition (low complexity). Phosphoserine occurs at positions 821 and 829. Polar residues-rich tracts occupy residues 829 to 851 (SVTN…SESS) and 859 to 874 (RTPS…PRVK). A phosphothreonine mark is found at Thr831 and Thr841. Residues Ser846, Ser850, and Ser851 each carry the phosphoserine modification. Low complexity-rich tracts occupy residues 875–891 (SSTP…SPQP) and 898–919 (SPRG…TSRT). Phosphoserine is present on residues Ser882, Ser909, Ser924, Ser926, Ser928, Ser940, Ser942, Ser944, Ser945, Ser946, and Ser949. Thr955 bears the Phosphothreonine mark. Residues 960 to 1000 (SGSTSPYLKSMLQTPPDQNLSGSKSPCPQKSRDSPTGSSGS) are compositionally biased toward polar residues. Residues Ser962 and Ser964 each carry the phosphoserine modification. Residue Tyr966 is modified to Phosphotyrosine. The residue at position 973 (Thr973) is a Phosphothreonine. A phosphoserine mark is found at Ser980, Ser984, and Ser993. Position 995 is a phosphothreonine (Thr995). Ser997, Ser1000, Ser1011, Ser1037, and Ser1038 each carry phosphoserine. Residues 1024–1057 (VQQKGHTQTWPDTSSPEVMQTQVESPLLQSKSQT) show a composition bias toward polar residues. The tract at residues 1024 to 1112 (VQQKGHTQTW…TKPDSSIYPL (89 aa)) is disordered. Phosphothreonine is present on Thr1044. A phosphoserine mark is found at Ser1048, Ser1064, Ser1066, Ser1067, and Ser1068. The segment covering 1058–1068 (SPKGSLSRSSS) has biased composition (low complexity). Thr1071 bears the Phosphothreonine mark. Phosphoserine occurs at positions 1077, 1087, 1094, 1097, 1117, 1151, 1159, 1175, 1188, 1216, 1225, 1229, 1230, 1269, 1276, 1278, 1284, 1287, 1294, 1305, 1325, 1338, 1339, 1340, 1343, 1359, and 1360. Residues 1079–1092 (VKQDKSEISTDPKL) show a composition bias toward basic and acidic residues. The interval 1136-2092 (IQEDVASSCI…RSPGMLEPLG (957 aa)) is disordered. Basic and acidic residues predominate over residues 1146-1158 (PRDKFSPTQDRPE). Residues 1270 to 1284 (PEHKELSHSPPRENS) show a composition bias toward basic and acidic residues. The span at 1285–1304 (FESSLEFKNSGPVSEVNTGF) shows a compositional bias: polar residues. Residue Thr1370 is modified to Phosphothreonine. The span at 1371–1387 (PSRERSSSASPELKDGL) shows a compositional bias: basic and acidic residues. A phosphoserine mark is found at Ser1372, Ser1378, and Ser1380. The residue at position 1390 (Thr1390) is a Phosphothreonine. Positions 1397 to 1408 (SGSSPGLRDGSG) are enriched in low complexity. 2 positions are modified to phosphoserine: Ser1400 and Ser1407. A Phosphothreonine modification is found at Thr1409. Polar residues predominate over residues 1409–1431 (TPSRHSLSGSSPGMKDTPQTPSR). Phosphoserine occurs at positions 1414, 1416, 1418, and 1419. Residue Thr1428 is modified to Phosphothreonine. Ser1438 and Ser1439 each carry phosphoserine. Position 1448 is a phosphothreonine (Thr1448). 5 positions are modified to phosphoserine: Ser1453, Ser1455, Ser1457, Ser1458, and Ser1465. Residues 1454-1468 (HSPSSPERNNKSVTP) are compositionally biased toward polar residues. The residue at position 1467 (Thr1467) is a Phosphothreonine. A phosphoserine mark is found at Ser1473, Ser1475, Ser1477, and Ser1478. The span at 1475–1489 (SESSVEQKNLARTSP) shows a compositional bias: polar residues. Thr1487 is subject to Phosphothreonine. The segment covering 1490–1499 (GQRSRSGSSQ) has biased composition (low complexity). Residues Ser1493, Ser1495, Ser1497, Ser1498, and Ser1508 each carry the phosphoserine modification. Residues 1511-1523 (ERSESDSSPDSKP) show a composition bias toward basic and acidic residues. Over residues 1524–1533 (KTRTPLRQRS) the composition is skewed to basic residues. Phosphoserine is present on residues Ser1533, Ser1535, Ser1537, Ser1538, Ser1554, Ser1556, Ser1557, Ser1572, Ser1576, Ser1577, Ser1604, Ser1614, Ser1647, Ser1649, and Ser1650. The segment covering 1604–1613 (SPEGSSSSES) has biased composition (low complexity). The segment covering 1637 to 1647 (KSHTPPRRRSS) has biased composition (basic residues). Position 1654 is a phosphothreonine (Thr1654). Phosphoserine is present on residues Ser1683, Ser1685, Ser1687, Ser1688, Ser1718, and Ser1720. Basic residues-rich tracts occupy residues 1725–1745 (GLQR…RRRD) and 1754–1772 (SRRR…RRRG). 6 positions are modified to phosphoserine: Ser1774, Ser1778, Ser1810, Ser1813, Ser1832, and Ser1834. Positions 1776-1789 (YHSRSPTRQESSRT) are enriched in low complexity. Over residues 1790–1810 (SSRRRRGRSRTPLTSRKRSRS) the composition is skewed to basic residues. Positions 1818-2020 (KRSRSRASPA…PRAARGKRSL (203 aa)) are enriched in basic residues. Thr1836 is subject to Phosphothreonine. Residues Ser1840 and Ser1846 each carry the phosphoserine modification. Phosphothreonine is present on Thr1848. Phosphoserine occurs at positions 1849, 1869, 1872, 1876, and 1878. Phosphothreonine occurs at positions 1880 and 1884. Residues Ser1898 and Ser1900 each carry the phosphoserine modification. Residues Thr1902 and Thr1906 each carry the phosphothreonine modification. Phosphoserine is present on residues Ser1910 and Ser1912. A phosphothreonine mark is found at Thr1914 and Thr1918. A phosphoserine mark is found at Ser1922, Ser1924, and Ser1927. Thr1930 is modified (phosphothreonine). Residues Ser1936, Ser1939, Ser1948, Ser1951, Ser1960, Ser1963, Ser1970, and Ser1972 each carry the phosphoserine modification. The residue at position 1974 (Thr1974) is a Phosphothreonine. Phosphoserine is present on residues Ser1982 and Ser1984. Thr1986 is subject to Phosphothreonine. Residues Ser1994, Ser1996, Ser1998, and Ser2019 each carry the phosphoserine modification. The residue at position 2021 (Thr2021) is a Phosphothreonine. Over residues 2022-2047 (RSPPAIRRRSASGSSSDRSRSATPPA) the composition is skewed to low complexity. Phosphoserine is present on residues Ser2023 and Ser2042. At Thr2044 the chain carries Phosphothreonine. Ser2052 and Ser2054 each carry phosphoserine. Thr2056 is subject to Phosphothreonine. Residues 2062–2076 (SSSRMSCFSRPSMSP) show a composition bias toward low complexity. 4 positions are modified to phosphoserine: Ser2070, Ser2073, Ser2075, and Ser2084. Thr2096 carries the post-translational modification Phosphothreonine. Arg2146, Arg2159, Arg2183, and Arg2198 each carry omega-N-methylarginine. Ser2224 is subject to Phosphoserine. Omega-N-methylarginine occurs at positions 2226 and 2240. 2 positions are modified to phosphothreonine: Thr2241 and Thr2254. Ser2262 bears the Phosphoserine mark. The interval 2263-2703 (LTGSGTPPTA…SNRHRSSRSP (441 aa)) is disordered. Phosphothreonine is present on residues Thr2268 and Thr2281. Residues 2269-2283 (PPTAANYPSSSRTPQ) show a composition bias toward polar residues. Omega-N-methylarginine is present on Arg2295. Residues Ser2296, Ser2321, and Ser2329 each carry the phosphoserine modification. Position 2334 is a phosphothreonine (Thr2334). At Ser2335 the chain carries Phosphoserine. Asymmetric dimethylarginine; alternate is present on Arg2337. At Arg2337 the chain carries Omega-N-methylarginine; alternate. Ser2347, Ser2351, and Ser2360 each carry phosphoserine. At Thr2362 the chain carries Phosphothreonine. 6 positions are modified to phosphoserine: Ser2365, Ser2368, Ser2381, Ser2384, Ser2404, and Ser2408. Polar residues-rich tracts occupy residues 2410–2443 (FSDQ…SASD) and 2467–2476 (TGAQQPSTLA). Residues 2487 to 2521 (SSSSSSSSSSSSSSSSSSSSSSSSGSSSSDSEGSS) show a composition bias toward low complexity. A Phosphoserine modification is found at Ser2535. Thr2537 is modified (phosphothreonine). A Glycyl lysine isopeptide (Lys-Gly) (interchain with G-Cter in SUMO2) cross-link involves residue Lys2541. Thr2553 is modified (phosphothreonine). Over residues 2562–2602 (SSSSSSSSSSSSSSSSSSSSSSSSSSSSSSSSSSSSSSSSS) the composition is skewed to low complexity. A compositionally biased stretch (pro residues) spans 2605–2622 (PAKPGPQALPKPASPKKP). Ser2618, Ser2629, Ser2631, Ser2638, Ser2642, Ser2644, Ser2646, Ser2648, Ser2656, and Ser2660 each carry phosphoserine. Residues 2623 to 2643 (PPGERRSRSPRKPIDSLRDSR) are compositionally biased toward basic and acidic residues. Thr2689 is subject to Phosphothreonine. Ser2691 carries the phosphoserine modification. Residues 2694–2703 (SNRHRSSRSP) are compositionally biased toward basic residues.

The protein belongs to the CWC21 family. Component of pre-catalytic, catalytic and post-catalytic spliceosome complexes. Found in a pre-mRNA splicing complex with SFRS4, SFRS5, SNRP70, SNRPA1, SRRM1 and SRRM2. Component of the minor spliceosome, which splices U12-type introns. Interacts with DHX8. Interacts with CACTIN.

The protein resides in the nucleus. Its subcellular location is the nucleus speckle. Required for pre-mRNA splicing as component of the spliceosome. As a component of the minor spliceosome, involved in the splicing of U12-type introns in pre-mRNAs. The polypeptide is Serine/arginine repetitive matrix protein 2 (Srrm2) (Mus musculus (Mouse)).